Consider the following 265-residue polypeptide: Hydroxyethylthiazole kinase (265 aa).

Methionine 50 lines the substrate pocket. ATP-binding residues include arginine 125 and threonine 171. Glycine 198 contributes to the substrate binding site.

It belongs to the Thz kinase family. Mg(2+) serves as cofactor.

The catalysed reaction is 5-(2-hydroxyethyl)-4-methylthiazole + ATP = 4-methyl-5-(2-phosphooxyethyl)-thiazole + ADP + H(+). The protein operates within cofactor biosynthesis; thiamine diphosphate biosynthesis; 4-methyl-5-(2-phosphoethyl)-thiazole from 5-(2-hydroxyethyl)-4-methylthiazole: step 1/1. Functionally, catalyzes the phosphorylation of the hydroxyl group of 4-methyl-5-beta-hydroxyethylthiazole (THZ). In Salmonella typhimurium (strain LT2 / SGSC1412 / ATCC 700720), this protein is Hydroxyethylthiazole kinase.